The chain runs to 458 residues: Elongation factor 1-alpha (458 aa).

N,N,N-trimethylglycine is present on glycine 2. N6,N6-dimethyllysine; alternate is present on lysine 3. The residue at position 3 (lysine 3) is an N6-methyllysine; alternate. One can recognise a tr-type G domain in the interval 5–240 (KTHVNVVVIG…DAIEPPQRPT (236 aa)). Positions 14-21 (GHVDSGKS) are G1. 14–21 (GHVDSGKS) contributes to the GTP binding site. Residue lysine 30 is modified to N6-methyllysine. Positions 70 to 74 (GITID) are G2. Lysine 79 carries the post-translational modification N6,N6,N6-trimethyllysine. Residues 91–94 (DAPG) are G3. Residues 91-95 (DAPGH) and 153-156 (NKMD) each bind GTP. Residues 153 to 156 (NKMD) form a G4 region. Positions 192-194 (SGW) are G5. Lysine 316 is modified (N6,N6-dimethyllysine; alternate). N6-methyllysine; alternate is present on lysine 316. Lysine 390 bears the N6-methyllysine mark.

It belongs to the TRAFAC class translation factor GTPase superfamily. Classic translation factor GTPase family. EF-Tu/EF-1A subfamily.

The protein resides in the cytoplasm. Its pathway is protein biosynthesis; polypeptide chain elongation. In terms of biological role, this protein promotes the GTP-dependent binding of aminoacyl-tRNA to the A-site of ribosomes during protein biosynthesis. In Meyerozyma guilliermondii (strain ATCC 6260 / CBS 566 / DSM 6381 / JCM 1539 / NBRC 10279 / NRRL Y-324) (Yeast), this protein is Elongation factor 1-alpha (TEF1).